Reading from the N-terminus, the 365-residue chain is Histidinol-phosphate aminotransferase 2 (365 aa).

Lys-222 is modified (N6-(pyridoxal phosphate)lysine).

The protein belongs to the class-II pyridoxal-phosphate-dependent aminotransferase family. Histidinol-phosphate aminotransferase subfamily. In terms of assembly, homodimer. Pyridoxal 5'-phosphate serves as cofactor.

The catalysed reaction is L-histidinol phosphate + 2-oxoglutarate = 3-(imidazol-4-yl)-2-oxopropyl phosphate + L-glutamate. It participates in amino-acid biosynthesis; L-histidine biosynthesis; L-histidine from 5-phospho-alpha-D-ribose 1-diphosphate: step 7/9. The chain is Histidinol-phosphate aminotransferase 2 (hisC2) from Bordetella parapertussis (strain 12822 / ATCC BAA-587 / NCTC 13253).